The following is a 798-amino-acid chain: Phenylalanine--tRNA ligase beta subunit (798 aa).

The region spanning 39 to 148 (SKHLGGFVVG…VTLAVGASLL (110 aa)) is the tRNA-binding domain. Residues 401-476 (DWQKSIVLRP…RINGYDNIPA (76 aa)) enclose the B5 domain. Residues Asp454, Asp460, Glu463, and Glu464 each contribute to the Mg(2+) site. One can recognise an FDX-ACB domain in the interval 704 to 797 (SALQPLDRDF…VAKATGGELR (94 aa)).

It belongs to the phenylalanyl-tRNA synthetase beta subunit family. Type 1 subfamily. Tetramer of two alpha and two beta subunits. It depends on Mg(2+) as a cofactor.

It localises to the cytoplasm. The catalysed reaction is tRNA(Phe) + L-phenylalanine + ATP = L-phenylalanyl-tRNA(Phe) + AMP + diphosphate + H(+). The polypeptide is Phenylalanine--tRNA ligase beta subunit (Paramagnetospirillum magneticum (strain ATCC 700264 / AMB-1) (Magnetospirillum magneticum)).